A 354-amino-acid chain; its full sequence is N-acylethanolamine-hydrolyzing acid amidase (354 aa).

Positions 1 to 22 are cleaved as a signal peptide; that stretch reads MRSPGIVLLLLLLLLLPPGAAP. N-linked (GlcNAc...) asparagine glycosylation is found at Asn35 and Asn104. The Nucleophile role is filled by Cys123. Residues Asn306, Asn312, and Asn352 are each glycosylated (N-linked (GlcNAc...) asparagine).

Belongs to the acid ceramidase family. As to quaternary structure, heterodimer of an alpha and a beta subunit, produced by autocatalytic cleavage. N-glycosylated. Tunicamycin treatment causes a reduction in specific activity against N-palmitoylethanolamine. Post-translationally, autoproteolytic cleavage at pH 4.5 gives rise to the alpha and beta subunit. Cleavage gives rise to a conformation change that activates the enzyme. The same catalytic Cys residue mediates the autoproteolytic cleavage and subsequent hydrolysis of lipid substrates.

It localises to the lysosome. It is found in the membrane. The enzyme catalyses N-hexadecanoylethanolamine + H2O = ethanolamine + hexadecanoate. It catalyses the reaction an N-(long-chain fatty acyl)ethanolamine + H2O = a long-chain fatty acid + ethanolamine. It carries out the reaction N-dodecanoylethanolamine + H2O = dodecanoate + ethanolamine. The catalysed reaction is N-tetradecanoylethanolamine + H2O = tetradecanoate + ethanolamine. The enzyme catalyses an N-acylsphing-4-enine + H2O = sphing-4-enine + a fatty acid. It catalyses the reaction N-hexadecanoylsphing-4-enine + H2O = sphing-4-enine + hexadecanoate. It carries out the reaction N-dodecanoylsphing-4-enine + H2O = dodecanoate + sphing-4-enine. The protein operates within lipid metabolism; fatty acid metabolism. Its function is as follows. Degrades bioactive fatty acid amides to their corresponding acids, with the following preference: N-palmitoylethanolamine &gt; N-myristoylethanolamine &gt; N-stearoylethanolamine &gt; N-oleoylethanolamine &gt; N-linoleoylethanolamine &gt; N-arachidonoylethanolamine. This is N-acylethanolamine-hydrolyzing acid amidase from Cavia porcellus (Guinea pig).